Reading from the N-terminus, the 864-residue chain is Mitochondrial 15S rRNA processing factor CCM1 (864 aa).

The N-terminal 76 residues, 1–76 (MYMARCGPKN…REFSNTLKER (76 aa)), are a transit peptide targeting the mitochondrion. PPR repeat units lie at residues 319–353 (NKQN…STKH) and 356–390 (DICT…NIKP).

Belongs to the CCM1 family. In terms of assembly, binds to mitochondrial small subunit 15S rRNA.

It localises to the mitochondrion. Regulates mitochondrial small subunit maturation by controlling 15S rRNA 5'-end processing. Localizes to the 5' precursor of the 15S rRNA in a position that is subsequently occupied by mS47 in the mature yeast mtSSU. Uses structure and sequence-specific RNA recognition, binding to a single-stranded region of the precursor and specifically recognizing bases -6 to -1. The exchange of Ccm1 for mS47 is coupled to the irreversible removal of precursor rRNA that is accompanied by conformational changes of the mitoribosomal proteins uS5m and mS26. These conformational changes signal completion of 5'-end rRNA processing through protection of the mature 5'-end of the 15S rRNA and stabilization of mS47. The removal of the 5' precursor together with the dissociation of Ccm1 may be catalyzed by the 5'-3' exoribonuclease Pet127. Involved in the specific removal of group I introns in mitochondrial encoded transcripts. The sequence is that of Mitochondrial 15S rRNA processing factor CCM1 (CCM1) from Saccharomyces cerevisiae (strain JAY291) (Baker's yeast).